The primary structure comprises 545 residues: Ribosomal protein uS12 methylthiotransferase RimO (545 aa).

The MTTase N-terminal domain occupies 7–129; the sequence is RRVALVTLGC…IGEHLDAVLG (123 aa). [4Fe-4S] cluster is bound by residues C16, C52, C92, C197, C201, and C204. The Radical SAM core domain occupies 183-414; sequence LTAGPVAALK…DLVEQLTATR (232 aa). Positions 416–510 constitute a TRAM domain; it reads QERIGSRVQV…GVDLVAEFTA (95 aa). Disordered regions lie at residues 454–486 and 516–545; these read LPGP…QPGV and RPSA…ADGT. Low complexity predominate over residues 455 to 464; that stretch reads PGPAGAAAGP.

This sequence belongs to the methylthiotransferase family. RimO subfamily. Requires [4Fe-4S] cluster as cofactor.

The protein localises to the cytoplasm. The enzyme catalyses L-aspartate(89)-[ribosomal protein uS12]-hydrogen + (sulfur carrier)-SH + AH2 + 2 S-adenosyl-L-methionine = 3-methylsulfanyl-L-aspartate(89)-[ribosomal protein uS12]-hydrogen + (sulfur carrier)-H + 5'-deoxyadenosine + L-methionine + A + S-adenosyl-L-homocysteine + 2 H(+). In terms of biological role, catalyzes the methylthiolation of an aspartic acid residue of ribosomal protein uS12. This Frankia alni (strain DSM 45986 / CECT 9034 / ACN14a) protein is Ribosomal protein uS12 methylthiotransferase RimO.